The following is a 247-amino-acid chain: LOB domain-containing protein 38 (247 aa).

Positions 1–107 constitute an LOB domain; sequence MSCNGCRVLR…VETVLRGGSL (107 aa). Low complexity predominate over residues 157–170; it reads FSSSRSRSRSTASP. Residues 157 to 184 form a disordered region; the sequence is FSSSRSRSRSTASPPKRKRLSSEQQPSS.

It belongs to the LOB domain-containing protein family. Expressed in young shoots, roots, stems, leaves and flowers.

The chain is LOB domain-containing protein 38 (LBD38) from Arabidopsis thaliana (Mouse-ear cress).